The following is a 371-amino-acid chain: Archaeal glycosylation protein Q (371 aa).

Positions 19 to 39 (QRSDGSMPAGHNGPYHDPETP) are disordered.

The protein localises to the cytoplasm. The protein operates within cell surface structure biogenesis; S-layer biogenesis. Its function is as follows. Putative isomerase involved in the N-glycosylation pathway. Required for the appearance of the methyl ester of hexuronic acid found at position four of the pentasaccharide N-linked to the S-layer glycoprotein. Either involved in preparing the third sugar for attachment of the fourth pentasaccharide subunit or processing the fourth sugar prior to its addition to the lipid-linked trisaccharide. The sequence is that of Archaeal glycosylation protein Q (aglQ) from Haloferax volcanii (strain ATCC 29605 / DSM 3757 / JCM 8879 / NBRC 14742 / NCIMB 2012 / VKM B-1768 / DS2) (Halobacterium volcanii).